The following is a 609-amino-acid chain: Phosphoprotein 85 (609 aa).

The tract at residues Q461 to L609 is disordered. The span at R465–T478 shows a compositional bias: low complexity. Positions P484–L495 are enriched in polar residues. 2 stretches are compositionally biased toward low complexity: residues S503–S513 and S552–S563. Basic and acidic residues predominate over residues R600–L609.

This sequence belongs to the herpesviridae pp85 family. Phosphorylated.

It localises to the virion tegument. It is found in the host cytoplasm. This Homo sapiens (Human) protein is Phosphoprotein 85 (U14).